Consider the following 409-residue polypeptide: Proteasome-activating nucleotidase (409 aa).

The disordered stretch occupies residues 1-22 (MTLSSAGGSRSHRHNGGHSERD). Residues 23 to 58 (VEIRILKDKVRSLTKEKISLQKELEYYKNEITKLLS) are a coiled coil. ATP is bound by residues 183 to 188 (GTGKTL) and His322.

The protein belongs to the AAA ATPase family. As to quaternary structure, homohexamer. The hexameric complex has a two-ring architecture resembling a top hat that caps the 20S proteasome core at one or both ends. Upon ATP-binding, the C-terminus of PAN interacts with the alpha-rings of the proteasome core by binding to the intersubunit pockets.

It localises to the cytoplasm. Functionally, ATPase which is responsible for recognizing, binding, unfolding and translocation of substrate proteins into the archaeal 20S proteasome core particle. Is essential for opening the gate of the 20S proteasome via an interaction with its C-terminus, thereby allowing substrate entry and access to the site of proteolysis. Thus, the C-termini of the proteasomal ATPase function like a 'key in a lock' to induce gate opening and therefore regulate proteolysis. Unfolding activity requires energy from ATP hydrolysis, whereas ATP binding alone promotes ATPase-20S proteasome association which triggers gate opening, and supports translocation of unfolded substrates. The chain is Proteasome-activating nucleotidase from Aeropyrum pernix (strain ATCC 700893 / DSM 11879 / JCM 9820 / NBRC 100138 / K1).